The primary structure comprises 93 residues: UPF0147 protein PF0239 (93 aa).

The protein belongs to the UPF0147 family.

This chain is UPF0147 protein PF0239, found in Pyrococcus furiosus (strain ATCC 43587 / DSM 3638 / JCM 8422 / Vc1).